The primary structure comprises 508 residues: Steroid 17-alpha-hydroxylase/17,20 lyase (508 aa).

Asn202 contributes to the substrate binding site. Position 442 (Cys442) interacts with heme.

It belongs to the cytochrome P450 family. It depends on heme as a cofactor.

The protein localises to the endoplasmic reticulum membrane. It is found in the microsome membrane. It catalyses the reaction a C21-steroid + reduced [NADPH--hemoprotein reductase] + O2 = a 17alpha-hydroxy-C21-steroid + oxidized [NADPH--hemoprotein reductase] + H2O + H(+). The enzyme catalyses progesterone + reduced [NADPH--hemoprotein reductase] + O2 = 17alpha-hydroxyprogesterone + oxidized [NADPH--hemoprotein reductase] + H2O + H(+). The catalysed reaction is pregnenolone + reduced [NADPH--hemoprotein reductase] + O2 = 17alpha-hydroxypregnenolone + oxidized [NADPH--hemoprotein reductase] + H2O + H(+). It carries out the reaction 17alpha-hydroxyprogesterone + reduced [NADPH--hemoprotein reductase] + O2 = androst-4-ene-3,17-dione + acetate + oxidized [NADPH--hemoprotein reductase] + H2O + 2 H(+). It catalyses the reaction 17alpha-hydroxyprogesterone + reduced [NADPH--hemoprotein reductase] + O2 = 16alpha,17alpha-dihydroxyprogesterone + oxidized [NADPH--hemoprotein reductase] + H2O + H(+). The enzyme catalyses 16alpha,17alpha-dihydroxyprogesterone + reduced [NADPH--hemoprotein reductase] + O2 = 6beta,16alpha,17alpha-trihydroxyprogesterone + oxidized [NADPH--hemoprotein reductase] + H2O + H(+). The catalysed reaction is 17alpha-hydroxypregnenolone + reduced [NADPH--hemoprotein reductase] + O2 = 3beta-hydroxyandrost-5-en-17-one + acetate + oxidized [NADPH--hemoprotein reductase] + H2O + 2 H(+). It carries out the reaction 16alpha,17alpha-dihydroxypregnenolone + reduced [NADPH--hemoprotein reductase] + O2 = 3beta,16alpha-dihydroxy-androst-5-en-17-one + acetate + oxidized [NADPH--hemoprotein reductase] + H2O + 2 H(+). It catalyses the reaction 3beta-hydroxyandrost-5-en-17-one + reduced [NADPH--hemoprotein reductase] + O2 = 3beta,16alpha-dihydroxy-androst-5-en-17-one + oxidized [NADPH--hemoprotein reductase] + H2O + H(+). The enzyme catalyses androst-4-ene-3,17-dione + reduced [NADPH--hemoprotein reductase] + O2 = 16alpha-hydroxyandrost-4-ene-3,17-dione + oxidized [NADPH--hemoprotein reductase] + H2O + H(+). The protein operates within steroid hormone biosynthesis. It participates in steroid biosynthesis; glucocorticoid biosynthesis. Its activity is regulated as follows. Regulated predominantly by intracellular cAMP levels. The 17,20-lyase activity is stimulated by cytochrome b5, which acts as an allosteric effector increasing the Vmax of the lyase activity. Its function is as follows. A cytochrome P450 monooxygenase involved in corticoid and androgen biosynthesis. Catalyzes 17-alpha hydroxylation of C21 steroids, which is common for both pathways. A second oxidative step, required only for androgen synthesis, involves an acyl-carbon cleavage. The 17-alpha hydroxy intermediates, as part of adrenal glucocorticoids biosynthesis pathway, are precursors of cortisol. Hydroxylates steroid hormones, pregnenolone and progesterone to form 17-alpha hydroxy metabolites, followed by the cleavage of the C17-C20 bond to form C19 steroids, dehydroepiandrosterone (DHEA) and androstenedione. Has 16-alpha hydroxylase activity. Catalyzes 16-alpha hydroxylation of 17-alpha hydroxy pregnenolone, followed by the cleavage of the C17-C20 bond to form 16-alpha-hydroxy DHEA. Also 16-alpha hydroxylates androgens, relevant for estriol synthesis. Mechanistically, uses molecular oxygen inserting one oxygen atom into a substrate, and reducing the second into a water molecule, with two electrons provided by NADPH via cytochrome P450 reductase (CPR; NADPH-ferrihemoprotein reductase). This is Steroid 17-alpha-hydroxylase/17,20 lyase (CYP17A1) from Papio cynocephalus (Yellow baboon).